The sequence spans 210 residues: Ribosomal RNA large subunit methyltransferase E (210 aa).

S-adenosyl-L-methionine contacts are provided by Gly64, Trp66, Asp84, Asp100, and Asp125. Catalysis depends on Lys165, which acts as the Proton acceptor.

It belongs to the class I-like SAM-binding methyltransferase superfamily. RNA methyltransferase RlmE family.

It is found in the cytoplasm. It carries out the reaction uridine(2552) in 23S rRNA + S-adenosyl-L-methionine = 2'-O-methyluridine(2552) in 23S rRNA + S-adenosyl-L-homocysteine + H(+). Functionally, specifically methylates the uridine in position 2552 of 23S rRNA at the 2'-O position of the ribose in the fully assembled 50S ribosomal subunit. The sequence is that of Ribosomal RNA large subunit methyltransferase E from Chromohalobacter salexigens (strain ATCC BAA-138 / DSM 3043 / CIP 106854 / NCIMB 13768 / 1H11).